We begin with the raw amino-acid sequence, 830 residues long: MKDPSREIIQVNIEEELKSSYLDYSMSVIVGRALPDVRDGLKPVHRRILFAMYILNNDWNKAYKKSARIVGDVIGKYHPHGDSAVYDAIVRMAQKFSLRYMLIDGQGNFGSVDGDSAAAMRYTEVRMSKIAHELLNDLEKNTVEFLPNYDGTEYIPEILPAKIPNLLINGSSGIAVGMATNIPPHNLNEVINGCLAYIDNNDITLEELIKHIPGPDFPTAAIINGKSGIEEAYRTGKGKIYIRAQNQIEKNKKNKKESIVFNEIPYQVNKSRLIEKIAELVKEKRIDGITALRDESDKDGMRIVIEIKREAIAEVILNQLYSLTQLQISFGINMVALCQGQPKTLSLKEILKNFLSHRQEIIIRRSLFELNKVRNRIHILEGLNMALININAIIEIIKNSVNSIDAKKIIIQKNWKSEKINYLAKKHEYYFSEKQAQAILDLRLHKITNLEQEKIIMEHNDLIKKTKELKEILENPKKMFEVIKSELLSIQNNFSDKRRTKITENHSDINMEDLINQEDVVVTLSHSGYVKYQPLSDYNAQRRGGKGKSAAKIKEEDFIESLVIANTHDTILCFSSRGILYWMKVYQLPESSRHARGRPIVNLLPLSPKERITAILPVHKYQDNLNIFMTTAHGIVKKSSLSQFKKPRFAGIIAINLHANDELIGVALTDGNNNIMLFTQNGKVVQFLENSVRTMGRTASGVKGIKIKKNDKVVSLIVPKNKGSILIATKNGYGKRTKISDFPIKSRATQGVISIKITKKNGKIIGAIQVIEKDQIMMITDAGTLVRIRVSEVGVLKRNTQGVILIRTSKNEKVVALQKIVDPMIEKIDL.

Residues 34–514 (LPDVRDGLKP…NHSDINMEDL (481 aa)) enclose the Topo IIA-type catalytic domain. Residue Tyr-122 is the O-(5'-phospho-DNA)-tyrosine intermediate of the active site. Residues 541–547 (QRRGGKG) carry the GyrA-box motif.

The protein belongs to the type II topoisomerase GyrA/ParC subunit family. As to quaternary structure, heterotetramer, composed of two GyrA and two GyrB chains. In the heterotetramer, GyrA contains the active site tyrosine that forms a transient covalent intermediate with DNA, while GyrB binds cofactors and catalyzes ATP hydrolysis.

Its subcellular location is the cytoplasm. The catalysed reaction is ATP-dependent breakage, passage and rejoining of double-stranded DNA.. Its function is as follows. A type II topoisomerase that negatively supercoils closed circular double-stranded (ds) DNA in an ATP-dependent manner to modulate DNA topology and maintain chromosomes in an underwound state. Negative supercoiling favors strand separation, and DNA replication, transcription, recombination and repair, all of which involve strand separation. Also able to catalyze the interconversion of other topological isomers of dsDNA rings, including catenanes and knotted rings. Type II topoisomerases break and join 2 DNA strands simultaneously in an ATP-dependent manner. This Buchnera aphidicola subsp. Acyrthosiphon pisum (strain APS) (Acyrthosiphon pisum symbiotic bacterium) protein is DNA gyrase subunit A.